A 299-amino-acid chain; its full sequence is RING-H2 finger protein ATL20 (299 aa).

A helical transmembrane segment spans residues 172-192; the sequence is LIITLCIIGGITATCIAAIRI. An RING-type; atypical zinc finger spans residues 253–295; sequence CPICLSEYASKETVRCMPECDHCFHVQCIDEWLKIHSSCPVCR.

The protein belongs to the RING-type zinc finger family. ATL subfamily.

It localises to the membrane. The catalysed reaction is S-ubiquitinyl-[E2 ubiquitin-conjugating enzyme]-L-cysteine + [acceptor protein]-L-lysine = [E2 ubiquitin-conjugating enzyme]-L-cysteine + N(6)-ubiquitinyl-[acceptor protein]-L-lysine.. The protein operates within protein modification; protein ubiquitination. In Arabidopsis thaliana (Mouse-ear cress), this protein is RING-H2 finger protein ATL20 (ATL20).